The sequence spans 637 residues: tRNA uridine 5-carboxymethylaminomethyl modification enzyme MnmG (637 aa).

Residues 15–20, Ile127, and Ser182 each bind FAD; that span reads GAGHAG. 276-290 contributes to the NAD(+) binding site; that stretch reads GPRYCPSIEDKIVRF. Gln373 provides a ligand contact to FAD.

Belongs to the MnmG family. As to quaternary structure, homodimer. Heterotetramer of two MnmE and two MnmG subunits. FAD serves as cofactor.

Its subcellular location is the cytoplasm. NAD-binding protein involved in the addition of a carboxymethylaminomethyl (cmnm) group at the wobble position (U34) of certain tRNAs, forming tRNA-cmnm(5)s(2)U34. The protein is tRNA uridine 5-carboxymethylaminomethyl modification enzyme MnmG of Streptococcus pneumoniae (strain Hungary19A-6).